The chain runs to 118 residues: Large ribosomal subunit protein bL20 (118 aa).

This sequence belongs to the bacterial ribosomal protein bL20 family.

In terms of biological role, binds directly to 23S ribosomal RNA and is necessary for the in vitro assembly process of the 50S ribosomal subunit. It is not involved in the protein synthesizing functions of that subunit. In Sulfurovum sp. (strain NBC37-1), this protein is Large ribosomal subunit protein bL20.